The sequence spans 270 residues: Dermonecrotic toxin LsaSicTox-alphaIB1av (270 aa).

Residue His-2 is part of the active site. 2 residues coordinate Mg(2+): Glu-22 and Asp-24. His-38 functions as the Nucleophile in the catalytic mechanism. Intrachain disulfides connect Cys-42/Cys-48 and Cys-44/Cys-187. Asp-82 is a binding site for Mg(2+).

The protein belongs to the arthropod phospholipase D family. Class II subfamily. Mg(2+) serves as cofactor. In terms of tissue distribution, expressed by the venom gland.

The protein localises to the secreted. The catalysed reaction is an N-(acyl)-sphingosylphosphocholine = an N-(acyl)-sphingosyl-1,3-cyclic phosphate + choline. The enzyme catalyses an N-(acyl)-sphingosylphosphoethanolamine = an N-(acyl)-sphingosyl-1,3-cyclic phosphate + ethanolamine. It catalyses the reaction a 1-acyl-sn-glycero-3-phosphocholine = a 1-acyl-sn-glycero-2,3-cyclic phosphate + choline. It carries out the reaction a 1-acyl-sn-glycero-3-phosphoethanolamine = a 1-acyl-sn-glycero-2,3-cyclic phosphate + ethanolamine. In terms of biological role, dermonecrotic toxins cleave the phosphodiester linkage between the phosphate and headgroup of certain phospholipids (sphingolipid and lysolipid substrates), forming an alcohol (often choline) and a cyclic phosphate. This toxin acts on sphingomyelin (SM). It may also act on ceramide phosphoethanolamine (CPE), lysophosphatidylcholine (LPC) and lysophosphatidylethanolamine (LPE), but not on lysophosphatidylserine (LPS), and lysophosphatidylglycerol (LPG). It acts by transphosphatidylation, releasing exclusively cyclic phosphate products as second products. Induces dermonecrosis, hemolysis, increased vascular permeability, edema, inflammatory response, and platelet aggregation. This chain is Dermonecrotic toxin LsaSicTox-alphaIB1av, found in Loxosceles sabina (Tucson recluse spider).